Reading from the N-terminus, the 122-residue chain is Large ribosomal subunit protein uL18 (122 aa).

Basic residues predominate over residues 1-22 (MDKNKKLQSKRLRRRRHVRNKL). The disordered stretch occupies residues 1 to 25 (MDKNKKLQSKRLRRRRHVRNKLRGS).

Belongs to the universal ribosomal protein uL18 family. As to quaternary structure, part of the 50S ribosomal subunit; part of the 5S rRNA/L5/L18/L25 subcomplex. Contacts the 5S and 23S rRNAs.

Functionally, this is one of the proteins that bind and probably mediate the attachment of the 5S RNA into the large ribosomal subunit, where it forms part of the central protuberance. The sequence is that of Large ribosomal subunit protein uL18 from Rhodopirellula baltica (strain DSM 10527 / NCIMB 13988 / SH1).